A 747-amino-acid chain; its full sequence is MLGKGVVGGGGGTKGPKPSFVSYVRPEEIHTNEKEVTEKEVTLHLLPGEQLLCEASTVLKYVQEDSCQHGVYGRLVCTDFKIAFLGDDESALDNDETQFKNKVIGENDITLHCVDQIYGVFDEKKKTLFGQLKKYPGKLIIHCKDFRVFQFCLGYTKEEEVKRIVSGIIHHTQAPKLLKRLFLFSYATAAQNNTVTDPKNHTVMFDTLKDWCWELERTKGNMKYKAVSVNEGYKVCERLPAYFVVPTPLPEENVQRFQGHGIPIWCWSCHNGSALLKMSALPKEQDDGILQIQKSFLDGIYKTIHRSPYEIVKTEDVSSNFLSLQEIQTAYSKFKQLFLTDNSTEFWDTDIKWFSLLESSSWLDIIRRCLKKAIEITECMEAQNMNVLLLEENASDLCCLISSLVQLMMDPHCRTRIGFQSLIQKEWVMGGHCFLDRCNHLRQNDKEEVPVFLLFLDCVWQLVHQHPPAFEFTETYLTVLSDSLYIPIFSTFFFNSPHQKDANMGREGQDAQSKPLNLLTVWDWSVQFEPKAQTLLKNPLYVEKPKLDKGQRKGMRFKHQRQLSLPLTQSKSSPKRGFFREETDHLIKNLLGKRISKLINSSDELQDNFREFYDSWHSKSTDYHGLLLPHIEGPEIKVWAQRYLRWIPEAQILGGGQVATMSKLLEMMEEVQSLQEKIDERHHSQQVPQAEAPCLLRNSARLSSLFPFALLQRHSSKPVLPTSGWKALGDEDDLAKREDEFVDLGDV.

A compositionally biased stretch (gly residues) spans 1–14; sequence MLGKGVVGGGGGTK. The disordered stretch occupies residues 1–21; it reads MLGKGVVGGGGGTKGPKPSFV. A Myotubularin phosphatase domain is found at 205-643; that stretch reads FDTLKDWCWE…PEIKVWAQRY (439 aa). The tract at residues 449–558 is interaction with MTM1; it reads VPVFLLFLDC…KGQRKGMRFK (110 aa). A phosphoserine mark is found at Ser564, Ser601, and Ser716.

It belongs to the protein-tyrosine phosphatase family. Non-receptor class myotubularin subfamily. Heterodimer with lipid phosphatase MTM1. Heterodimer with lipid phosphatase MTMR2.

The protein resides in the cytoplasm. Its subcellular location is the sarcoplasmic reticulum. It localises to the myofibril. It is found in the sarcomere. In terms of biological role, acts as an adapter for the myotubularin-related phosphatases. Regulates phosphatase MTM1 protein stability and possibly its intracellular location. By stabilizing MTM1 protein levels, required for skeletal muscle maintenance but not for myogenesis. This Pongo abelii (Sumatran orangutan) protein is Myotubularin-related protein 12 (MTMR12).